A 316-amino-acid polypeptide reads, in one-letter code: tRNA dimethylallyltransferase (316 aa).

17 to 24 (GPTASGKT) lines the ATP pocket. Substrate is bound at residue 19–24 (TASGKT). Interaction with substrate tRNA regions lie at residues 42–45 (DSVL), 166–170 (QRLSR), 247–252 (RCVGYR), and 280–287 (KRQITWLR).

The protein belongs to the IPP transferase family. Monomer. Mg(2+) is required as a cofactor.

The catalysed reaction is adenosine(37) in tRNA + dimethylallyl diphosphate = N(6)-dimethylallyladenosine(37) in tRNA + diphosphate. In terms of biological role, catalyzes the transfer of a dimethylallyl group onto the adenine at position 37 in tRNAs that read codons beginning with uridine, leading to the formation of N6-(dimethylallyl)adenosine (i(6)A). The protein is tRNA dimethylallyltransferase of Shigella flexneri.